Here is a 249-residue protein sequence, read N- to C-terminus: Proteasome subunit alpha type-7-1A (249 aa).

It belongs to the peptidase T1A family. As to quaternary structure, the 26S proteasome consists of a 20S proteasome core and two 19S regulatory subunits. The 20S proteasome core is composed of 28 subunits that are arranged in four stacked rings, resulting in a barrel-shaped structure. The two end rings are each formed by seven alpha subunits, and the two central rings are each formed by seven beta subunits. The catalytic chamber with the active sites is on the inside of the barrel. As to expression, testis specific.

Its subcellular location is the cytoplasm. It localises to the nucleus. The proteasome is a multicatalytic proteinase complex which is characterized by its ability to cleave peptides with Arg, Phe, Tyr, Leu, and Glu adjacent to the leaving group at neutral or slightly basic pH. The proteasome has an ATP-dependent proteolytic activity. This Drosophila melanogaster (Fruit fly) protein is Proteasome subunit alpha type-7-1A (Prosalpha4T1).